We begin with the raw amino-acid sequence, 412 residues long: GATOR complex protein NPRL2 (412 aa).

Belongs to the NPR2 family. As to quaternary structure, component of the GATOR complex consisting of mio, Nup44A/Seh1, Im11, Nplr3, Nplr2, Wdr24, Wdr59 and Sec13. Within the GATOR complex, probable component of the GATOR1 subcomplex which is likely composed of Iml1, Nplr2 and Nplr3. Interacts with Nprl3.

It is found in the cytoplasm. The protein resides in the lysosome. An essential component of the GATOR subcomplex GATOR1 which functions as an inhibitor of the amino acid-sensing branch of the TORC1 signaling pathway. The two GATOR subcomplexes, GATOR1 and GATOR2, regulate the TORC1 pathway in order to mediate metabolic homeostasis, female gametogenesis and the response to amino acid limitation and complete starvation. The function of GATOR1 in negatively regulating the TORC1 pathway is essential for maintaining baseline levels of TORC1 activity under nutrient rich conditions, and for promoting survival during amino acid or complete starvation by inhibiting TORC1-dependent cell growth and promoting catabolic metabolism and autophagy. In addition, this inhibition of TORC1 is necessary to maintain female fertility under normal conditions and during periods of nutrient stress. GATOR1 and GATOR2 act at different stages of oogenesis to regulate TORC1 in order to control meiotic entry and promote oocyte growth and development. After exactly four mitotic cyst divisions, the GATOR1 complex members (Iml1, Nprl2 and Nprl3) down-regulate TORC1 to slow cellular metabolism and promote the mitotic/meiotic transition. At later stages of oogenesis, the mio and Nup44A components of the GATOR2 complex inhibit GATOR1 and thus activate TORC1 to promote meiotic progression, and drive oocyte growth and development. This is GATOR complex protein NPRL2 from Drosophila melanogaster (Fruit fly).